The sequence spans 25 residues: Caerin-2.5 (25 aa).

As to expression, expressed by the skin parotoid and/or rostral glands.

It is found in the secreted. Functionally, antibacterial peptide, that adopts an alpha helical conformation which can disrupt bacterial membranes. Each caerin displays a different antimicrobial specificity. In Ranoidea gilleni (Centralian tree frog), this protein is Caerin-2.5.